We begin with the raw amino-acid sequence, 352 residues long: Protein RecA (352 aa).

65 to 72 (GPESSGKT) is an ATP binding site.

Belongs to the RecA family.

It localises to the cytoplasm. Functionally, can catalyze the hydrolysis of ATP in the presence of single-stranded DNA, the ATP-dependent uptake of single-stranded DNA by duplex DNA, and the ATP-dependent hybridization of homologous single-stranded DNAs. It interacts with LexA causing its activation and leading to its autocatalytic cleavage. Plays a functional role in the DNA rearrangement associated with the phenotypic switching from a pathogenic smooth to a nonpathogenic rough form in this bacterium. This Pseudomonas tolaasii protein is Protein RecA.